A 511-amino-acid polypeptide reads, in one-letter code: Putative polyol transporter 2 (511 aa).

The next 12 membrane-spanning stretches (helical) occupy residues 25-45 (FAFA…YDIG), 63-83 (VQLE…SGAA), 94-114 (YTIV…GFAT), 117-137 (PFIM…MMIA), 156-176 (FPEI…YFFA), 186-206 (FMLG…LAMP), 284-304 (ILIA…DAVV), 324-344 (LATV…TCLV), 351-371 (ALLL…GTSL), 384-404 (WAIG…SLGA), 424-444 (GASL…MTFL), and 454-474 (GAFL…FTFL).

This sequence belongs to the major facilitator superfamily. Sugar transporter (TC 2.A.1.1) family.

The protein localises to the membrane. Plasma membrane sugar-proton symporter. The protein is Putative polyol transporter 2 (PLT2) of Arabidopsis thaliana (Mouse-ear cress).